A 29-amino-acid polypeptide reads, in one-letter code: Cytochrome b6-f complex subunit 8 (29 aa).

A helical transmembrane segment spans residues 3-23 (ILALGWVSVLALFTWSIAMVV).

It belongs to the PetN family. The 4 large subunits of the cytochrome b6-f complex are cytochrome b6, subunit IV (17 kDa polypeptide, PetD), cytochrome f and the Rieske protein, while the 4 small subunits are PetG, PetL, PetM and PetN. The complex functions as a dimer.

The protein resides in the cellular thylakoid membrane. Component of the cytochrome b6-f complex, which mediates electron transfer between photosystem II (PSII) and photosystem I (PSI), cyclic electron flow around PSI, and state transitions. The sequence is that of Cytochrome b6-f complex subunit 8 from Gloeothece citriformis (strain PCC 7424) (Cyanothece sp. (strain PCC 7424)).